Consider the following 341-residue polypeptide: MQVADFDYHLPEERIAKYPPLERGSTRLLVLNRQSGALTHSLYAHLDTFLQAGDLLLLNNTRVVPARLFATRATGATIELMLLERHHHREQLVLYRGQLKAGEMLQSHGHTLLVEEVLPQGLARLALADGGDLHQFFTQFGSVPIPPYLKRNAEAVDRERYQTVFAAHSGSVAAPTASLNMTPELLQRLKNNGVEIAHITLHVGLGTFLPIRTESLEEHVMHRESYLLPAESVAALQRVKADGGRVVAVGTTVTRALEHSAPRILQSSAHAEIEGEADIFIYPGYRFQMVDLLLTNFHAPRSTVLMLTAACAGTDNLRAAYSEAVLQGYNFLSYGDSMLIC.

The protein belongs to the QueA family. As to quaternary structure, monomer.

The protein localises to the cytoplasm. It catalyses the reaction 7-aminomethyl-7-carbaguanosine(34) in tRNA + S-adenosyl-L-methionine = epoxyqueuosine(34) in tRNA + adenine + L-methionine + 2 H(+). It functions in the pathway tRNA modification; tRNA-queuosine biosynthesis. Functionally, transfers and isomerizes the ribose moiety from AdoMet to the 7-aminomethyl group of 7-deazaguanine (preQ1-tRNA) to give epoxyqueuosine (oQ-tRNA). This is S-adenosylmethionine:tRNA ribosyltransferase-isomerase from Chlorobium chlorochromatii (strain CaD3).